A 1727-amino-acid polypeptide reads, in one-letter code: MGQTLTTPLSLTLTHFSDVRARAHNLSVGVRKGRWQTFCSSEWPTLHVGWPRDGTFDLSVILQVKTKVMDPGPHGHPDQVAYIITWEDLVRNPPPWVKPFLHTPSTSKSTLLALEVPKNRTLDPPKPVLPDESQQDLLFQDPLPHPPHNPLLEPPPYNSPSPPVLSPVSPTTPSAPTPSSLVSSSTPPSSPAPPELTPRTPPQTPRLRLRRAEGQDGPSTWQSSLFPLRTVNRTIQYWPFSASDLYNWKTHNPSFSQDPQALTSLIESILLTHQPTWDDCQQLLQVLLTTEERQRVLLEARKNVPGPGGLPTQLPNEIDEGFPLTRPDWDYETAPGRESLRIYRQALLAGLKGAGKRPTNLAKVRTITQGKDESPAAFMERLLEGFRMYTPFDPEAPEHKATVAMSFIDQAALDIKGKLQRLDGIQTHGLQELVREAEKVYNKRETPEEREARLIKEQEEREDRRDRKRDKHLTKILAAVVTEKRAGKSGETRRRPKVDKDQCAYCKERGHWIKDCPKRPRDQKKPAPVLTLGEDSEQGCQGSGAPPEPRLTLSVGGHPTTFLVDTGAQHSVLTKANGPLSSRTSWVQGATGRKMHKWTNRRTVNLGQGMVTHSFLVVPECPYPLLGRDLLTKLGAQIHFSEAGAQVLDRDGQPIQILTVSLQDEHRLFDIPVTTSLPDVWLQDFPQAWAETGGLGRAKCQAPIIIDLKPTAVPVSIKQYPMSLEAHMGIRQHIIKFLELGVLRPCRSPWNTPLLPVKKPGTQDYRPVQDLREINKRTVDIHPTVPNPYNLLSTLKPDYSWYTVLDLKDAFFCLPLAPQSQELFAFEWKDPERGISGQLTWTRLPQGFKNSPTLFDEALHRDLTDFRTQHPEVTLLQYVDDLLLAAPTKKACTQGTRHLLQELGEKGYRASAKKAQICQTKVTYLGYILSEGKRWLTPGRIETVARIPPPRNPREVREFLGTAGFCRLWIPGFAELAAPLYALTKESTPFTWQTEHQLAFEALKKALLSAPALGLPDTSKPFTLFLDERQGIAKGVLTQKLGPWKRPVAYLSKKLDPVAAGWPPCLRIMAATAMLVKDSAKLTLGQPLTVITPHTLEAIVRQPPDRWITNARLTHYQALLLDTDRVQFGPPVTLNPATLLPVPENQPSPHDCRQVLAETHGTREDLKDQELPDADHTWYTDGSSYLDSGTRRAGAAVVDGHNTIWAQSLPPGTSAQKAELIALTKALELSKGKKANIYTDSRYAFATAHTHGSIYERRGLLTSEGKEIKNKAEIIALLKALFLPQEVAIIHCPGHQKGQDPVAVGNRQADRVARQAAMAEVLTLATEPDNTSHITIEHTYTSEDQEEARAIGATENKDTRNWEKEGKIVLPQKEALAMIQQMHAWTHLGNRKLKLLIEKTDFLIPRASTLIEQVTSACKVCQQVNAGATRVPAGKRTRGNRPGVYWEIDFTEVKPHYAGYKYLLVFVDTFSGWVEAFPTRQETAHIVAKKILEEIFPRFGLPKVIGSDNGPAFVSQVSQGLARILGINWKLHCAYRPQSSGQVERMNRTIKETLTKLTLETGLKDWRRLLSLALLRARNTPNRFGLTPYEILYGGPPPLSTLLNSFSPSNSKTDLQARLKGLQAVQAQIWAPLAELYRPGHSQTSHPFQVGDSVYVRRHRSQGLEPRWKGPYIVLLTTPTAIKVDGIATWIHASHAKAAPGTPGPTSSGTWRLRRSEDPLKIRLSRT.

A lipid anchor (N-myristoyl glycine; by host) is attached at G2. A PTAP/PSAP motif motif is present at residues 109–112; sequence STLL. Positions 128–132 match the LYPX(n)L motif motif; it reads VLPDE. 4 disordered regions span residues 137 to 221, 302 to 322, 443 to 471, and 515 to 547; these read LLFQ…PSTW, KNVP…DEGF, KRET…KRDK, and DCPK…GAPP. Residues 143-165 show a composition bias toward pro residues; sequence LPHPPHNPLLEPPPYNSPSPPVL. The PPXY motif motif lies at 154 to 157; the sequence is PPPY. The span at 166-187 shows a compositional bias: low complexity; sequence SPVSPTTPSAPTPSSLVSSSTP. A compositionally biased stretch (pro residues) spans 188-204; the sequence is PSSPAPPELTPRTPPQT. 2 stretches are compositionally biased toward basic and acidic residues: residues 443 to 465 and 515 to 525; these read KRET…EDRR and DCPKRPRDQKK. A CCHC-type zinc finger spans residues 501–518; that stretch reads DQCAYCKERGHWIKDCPK. The Peptidase A2 domain occupies 560-630; the sequence is TTFLVDTGAQ…CPYPLLGRDL (71 aa). The active-site Protease; shared with dimeric partner is the D565. Residues 736-929 form the Reverse transcriptase domain; sequence KFLELGVLRP…TKVTYLGYIL (194 aa). Positions 806, 880, 881, 1181, 1219, 1240, and 1310 each coordinate Mg(2+). An RNase H type-1 domain is found at 1172–1318; it reads PDADHTWYTD…ADRVARQAAM (147 aa). The HHCC-type zinc-finger motif lies at 1383–1421; sequence HAWTHLGNRKLKLLIEKTDFLIPRASTLIEQVTSACKVC. The Integrase catalytic domain occupies 1438 to 1596; sequence RGNRPGVYWE…TPYEILYGGP (159 aa). The Mg(2+) site is built by D1449 and D1508.

It belongs to the retroviral Pol polyprotein family. As to quaternary structure, homohexamer; further associates as homomultimer. The virus core is composed of a lattice formed from hexagonal rings, each containing six capsid monomers. In terms of assembly, interacts (via PPXY motif) with host NEDD4. Interacts (via PSAP motif) with host TSG101. Interacts (via LYPX(n)L motif) with host PDCD6IP. The reverse transcriptase is a monomer (Potential). Interacts (via RNase domains) with host release factor ETF1; this interaction is essential for translational readthrough of amber codon between viral gag and pol genes, as well as for viral replication. As to quaternary structure, homodimer. Mg(2+) serves as cofactor. In terms of processing, specific enzymatic cleavages by the viral protease yield mature proteins. The protease is released by autocatalytic cleavage. The polyprotein is cleaved during and after budding, this process is termed maturation. Phosphorylated on serine residues.

Its subcellular location is the virion. The protein localises to the host cell membrane. It is found in the host late endosome membrane. The protein resides in the host endosome. It localises to the host multivesicular body. Its subcellular location is the host cytoplasm. The enzyme catalyses DNA(n) + a 2'-deoxyribonucleoside 5'-triphosphate = DNA(n+1) + diphosphate. It carries out the reaction Endonucleolytic cleavage to 5'-phosphomonoester.. Its activity is regulated as follows. Most efficiently inhibited by Amprenavir, which is able to block Gag-Pol processing in infected cells. Its function is as follows. Plays a role in budding and is processed by the viral protease during virion maturation outside the cell. During budding, it recruits, in a PPXY-dependent or independent manner, Nedd4-like ubiquitin ligases that conjugate ubiquitin molecules to Gag-Pol, or to Gag-Pol binding host factors. Interaction with HECT ubiquitin ligases probably links the viral protein to the host ESCRT pathway and facilitates release. Functionally, targets Gag and gag-pol polyproteins to the plasma membrane via a multipartite membrane binding signal, that includes its myristoylated N-terminus. Also mediates nuclear localization of the pre-integration complex. Constituent of the pre-integration complex (PIC) which tethers the latter to mitotic chromosomes. This allows the integration of the viral genome into the host DNA. In terms of biological role, forms the spherical core of the virion that encapsulates the genomic RNA-nucleocapsid complex. Its function is as follows. Involved in the packaging and encapsidation of two copies of the genome. Binds with high affinity to conserved UCUG elements within the packaging signal, located near the 5'-end of the genome. This binding is dependent on genome dimerization. Acts as a nucleic acid chaperone which is involved in rearrangement of nucleic acid secondary structures during gRNA retrotranscription. Functionally, the aspartyl protease mediates proteolytic cleavages of Gag and Gag-Pol polyproteins during or shortly after the release of the virion from the plasma membrane. Cleavages take place as an ordered, step-wise cascade to yield mature proteins. This process is called maturation. Displays maximal activity during the budding process just prior to particle release from the cell. RT is a multifunctional enzyme that converts the viral dimeric RNA genome into dsDNA in the cytoplasm, shortly after virus entry into the cell. This enzyme displays a DNA polymerase activity that can copy either DNA or RNA templates, and a ribonuclease H (RNase H) activity that cleaves the RNA strand of RNA-DNA heteroduplexes in a partially processive 3' to 5' endonucleasic mode. Conversion of viral genomic RNA into dsDNA requires many steps. A tRNA binds to the primer-binding site (PBS) situated at the 5' end of the viral RNA. RT uses the 3' end of the tRNA primer to perform a short round of RNA-dependent minus-strand DNA synthesis. The reading proceeds through the U5 region and ends after the repeated (R) region which is present at both ends of viral RNA. The portion of the RNA-DNA heteroduplex is digested by the RNase H, resulting in a ssDNA product attached to the tRNA primer. This ssDNA/tRNA hybridizes with the identical R region situated at the 3' end of viral RNA. This template exchange, known as minus-strand DNA strong stop transfer, can be either intra- or intermolecular. RT uses the 3' end of this newly synthesized short ssDNA to perform the RNA-dependent minus-strand DNA synthesis of the whole template. RNase H digests the RNA template except for a polypurine tract (PPT) situated at the 5' end of the genome. It is not clear if both polymerase and RNase H activities are simultaneous. RNase H probably can proceed both in a polymerase-dependent (RNA cut into small fragments by the same RT performing DNA synthesis) and a polymerase-independent mode (cleavage of remaining RNA fragments by free RTs). Secondly, RT performs DNA-directed plus-strand DNA synthesis using the PPT that has not been removed by RNase H as primers. PPT and tRNA primers are then removed by RNase H. The 3' and 5' ssDNA PBS regions hybridize to form a circular dsDNA intermediate. Strand displacement synthesis by RT to the PBS and PPT ends produces a blunt ended, linear dsDNA copy of the viral genome that includes long terminal repeats (LTRs) at both ends. In terms of biological role, catalyzes viral DNA integration into the host chromosome, by performing a series of DNA cutting and joining reactions. This enzyme activity takes place after virion entry into a cell and reverse transcription of the RNA genome in dsDNA. The first step in the integration process is 3' processing. This step requires a complex comprising the viral genome, matrix protein and integrase. This complex is called the pre-integration complex (PIC). The integrase protein removes 2 nucleotides from each 3' end of the viral DNA, leaving recessed CA OH's at the 3' ends. In the second step that requires cell division, the PIC enters cell nucleus. In the third step, termed strand transfer, the integrase protein joins the previously processed 3' ends to the 5' ends of strands of target cellular DNA at the site of integration. The last step is viral DNA integration into host chromosome. The protein is Gag-Pol polyprotein (pol) of Papio (baboons).